The primary structure comprises 218 residues: 7-cyano-7-deazaguanine synthase 1 (218 aa).

ATP is bound at residue tyrosine 9–leucine 19. Zn(2+)-binding residues include cysteine 185, cysteine 193, cysteine 196, and cysteine 199.

Belongs to the QueC family. Zn(2+) serves as cofactor.

The enzyme catalyses 7-carboxy-7-deazaguanine + NH4(+) + ATP = 7-cyano-7-deazaguanine + ADP + phosphate + H2O + H(+). The protein operates within purine metabolism; 7-cyano-7-deazaguanine biosynthesis. Its function is as follows. Catalyzes the ATP-dependent conversion of 7-carboxy-7-deazaguanine (CDG) to 7-cyano-7-deazaguanine (preQ(0)). This Colwellia psychrerythraea (strain 34H / ATCC BAA-681) (Vibrio psychroerythus) protein is 7-cyano-7-deazaguanine synthase 1.